Reading from the N-terminus, the 383-residue chain is Fatty acid hydroxylase ahd1 (383 aa).

4 helical membrane-spanning segments follow: residues 84 to 104 (VMGLTTHFVTITMAIVFNKSW), 123 to 143 (TVHTWILLSTCQLLVIGLFAL), 172 to 192 (LIPVVLFNLVVVNTISNIIYY), and 214 to 236 (VAQWLVCLLMEDIGFYTVHRALH). A Fatty acid hydroxylase domain is found at 217–341 (WLVCLLMEDI…VGLLDAIFKT (125 aa)). N-linked (GlcNAc...) asparagine glycosylation occurs at Asn342.

Belongs to the sterol desaturase family.

It localises to the membrane. The protein operates within secondary metabolite biosynthesis. Fatty acid hydroxylase; part of the gene cluster that mediates the biosynthesis of the glycolipid biosurfactant ustilagic acid (UA). UA is a secreted cellobiose glycolipid that is toxic for many microorganisms and confers biocontrol activity to U.maydis. UA consists of 15,16-dihydroxypalmitic or 2,15,16-trihydroxypalmitic acid, which is O-glycosidically linked to cellobiose at its terminal hydroxyl group. In addition, the cellobiose moiety is acetylated and acylated with a short-chain hydroxy fatty acid. UA biosynthesis starts with omega-hydroxylation of palmitic acid catalyzed by the cytochrome P450 monooxygenase cyp1. Terminal hydroxylation of palmitic acid precedes subterminal hydroxylation catalyzed by the cytochrome P450 monooxygenase cyp2. Sequential glucosylation of the hydroxy fatty acid is probably catalyzed by the glycosyltransferase ugt1. The cellobiose lipid is further decorated by acetylation of the proximal glucose residue and by acylation with a short-chain beta-hydroxy fatty acid at the distal glucose residue. The acyltransferase uat1 may be a good candidate for catalyzing either acetylation or acylation of the cellobiose lipid. The fatty acid synthase fas2 may be involved in synthesis of the carbon backbone of the short-chain beta-hydroxy fatty acid esterified to the cellobiose disaccharide. The secreted UA consists of a mixture of both alpha-hydroxylated and non-hydroxylated glycolipids; therefore, alpha-hydroxylation of the long-chain fatty, catalyzed by the fatty acid hydroxylase ahd1, occurs late in UA biosynthesis and may be the last step before secretion. In Mycosarcoma maydis (Corn smut fungus), this protein is Fatty acid hydroxylase ahd1.